Reading from the N-terminus, the 118-residue chain is V-type proton ATPase subunit G 2 (118 aa).

Residues 8–57 (IQQLLQAEKRAAEKVADARKRKARRLKQAKEEAQMEVDQYRREREQEFQS) adopt a coiled-coil conformation. The interval 25-90 (ARKRKARRLK…VQGMQSSQQR (66 aa)) is disordered. Basic and acidic residues predominate over residues 35–55 (QAKEEAQMEVDQYRREREQEF). Composition is skewed to polar residues over residues 56–69 (QSKQ…QGNL) and 78–89 (RRQVQGMQSSQQ).

It belongs to the V-ATPase G subunit family. As to quaternary structure, V-ATPase is a heteromultimeric enzyme made up of two complexes: the ATP-hydrolytic V1 complex and the proton translocation V0 complex. The V1 complex consists of three catalytic AB heterodimers that form a heterohexamer, three peripheral stalks each consisting of EG heterodimers, one central rotor including subunits D and F, and the regulatory subunits C and H. The proton translocation complex V0 consists of the proton transport subunit a, a ring of proteolipid subunits c9c'', rotary subunit d, subunits e and f, and the accessory subunits ATP6AP1/Ac45 and ATP6AP2/PRR. Expressed in brain (at protein level).

Its subcellular location is the melanosome. It localises to the cytoplasmic vesicle. It is found in the clathrin-coated vesicle membrane. Functionally, subunit of the V1 complex of vacuolar(H+)-ATPase (V-ATPase), a multisubunit enzyme composed of a peripheral complex (V1) that hydrolyzes ATP and a membrane integral complex (V0) that translocates protons. V-ATPase is responsible for acidifying and maintaining the pH of intracellular compartments and in some cell types, is targeted to the plasma membrane, where it is responsible for acidifying the extracellular environment. This Bos taurus (Bovine) protein is V-type proton ATPase subunit G 2.